A 69-amino-acid chain; its full sequence is Probable rubredoxin HupI (69 aa).

Residues 16-67 (VTRLECGICWTVYDPADGDDVAQIAPGTPFAALPEEWHCPNCDAPKSKFMAI) form the Rubredoxin-like domain. Fe cation contacts are provided by cysteine 21, cysteine 24, cysteine 54, and cysteine 57.

This sequence belongs to the rubredoxin family. Fe(3+) serves as cofactor.

Could be an electron transport intermediate in hydrogen oxidation. The protein is Probable rubredoxin HupI (hupI) of Bradyrhizobium diazoefficiens (strain JCM 10833 / BCRC 13528 / IAM 13628 / NBRC 14792 / USDA 110).